A 30-amino-acid polypeptide reads, in one-letter code: Photosystem I reaction center subunit XII (30 aa).

A helical transmembrane segment spans residues 7–26 (IFVALLFALVSAVLAIRLGT).

It belongs to the PsaM family.

Its subcellular location is the plastid. It is found in the chloroplast thylakoid membrane. The protein is Photosystem I reaction center subunit XII of Gracilaria tenuistipitata var. liui (Red alga).